The sequence spans 422 residues: G-protein coupled receptor 151 protein (422 aa).

The Extracellular portion of the chain corresponds to 1–45; it reads MGKAMLRAGFADTNSSNMNESFARLHFAGGYLPSDSKDWRTIIPS. N-linked (GlcNAc...) asparagine glycosylation is found at Asn-14 and Asn-19. Residues 46 to 66 traverse the membrane as a helical segment; it reads LLMAVCLVGLVGNLCVIGILL. At 67 to 76 the chain is on the cytoplasmic side; it reads HGVWKRKPST. Residues 77-97 form a helical membrane-spanning segment; the sequence is IHSLILNLSLADFSLLLFSAP. Over 98-123 the chain is Extracellular; sequence VRAAAYSKGVWDLGWFICKSSDWFTH. Cysteines 115 and 191 form a disulfide. A helical membrane pass occupies residues 124–144; sequence VCMAAKSLTFVVVAKACFAYA. At 145 to 157 the chain is on the cytoplasmic side; that stretch reads SDPAKQESIHSRT. Residues 158 to 178 traverse the membrane as a helical segment; sequence IWSVLAGIWVVASLLPLPEWL. At 179–205 the chain is on the extracellular side; that stretch reads FSTTRRHAGVEMCLVDVPAVAEEFMSM. Residues 206–226 form a helical membrane-spanning segment; it reads FGKLYPLLVFCLPLLLAGVYF. The Cytoplasmic segment spans residues 227-259; it reads WRAYDQCKTRCTKTRNLRDQMRSKQLTVMLLST. A helical transmembrane segment spans residues 260–280; sequence AIISALLWLPEWIAWLWVWHV. The Extracellular portion of the chain corresponds to 281-290; that stretch reads KAGGPMPPQG. The chain crosses the membrane as a helical span at residues 291-311; it reads FIALSQVLMFFTSTANPLIFL. At 312 to 422 the chain is on the cytoplasmic side; sequence VMSEEFKAGL…HEGQETEGCN (111 aa). The tract at residues 339 to 422 is disordered; the sequence is VQEAPAGNTE…HEGQETEGCN (84 aa). Basic and acidic residues predominate over residues 366–380; sequence TDGRGSPDDSKEKSG.

In terms of tissue distribution, high expression in the brain and lower levels in kidney and liver. In the nervous system expressed specifically in the habenular area (at protein level).

It localises to the cell membrane. Its function is as follows. Proton-sensing G-protein coupled receptor. The chain is G-protein coupled receptor 151 protein (Gpr151) from Mus musculus (Mouse).